Here is a 133-residue protein sequence, read N- to C-terminus: Small ribosomal subunit protein uS8 (133 aa).

It belongs to the universal ribosomal protein uS8 family. Part of the 30S ribosomal subunit. Contacts proteins S5 and S12.

Functionally, one of the primary rRNA binding proteins, it binds directly to 16S rRNA central domain where it helps coordinate assembly of the platform of the 30S subunit. The polypeptide is Small ribosomal subunit protein uS8 (Gloeobacter violaceus (strain ATCC 29082 / PCC 7421)).